A 163-amino-acid chain; its full sequence is Putative 4-hydroxy-4-methyl-2-oxoglutarate aldolase (163 aa).

Substrate is bound by residues 76 to 79 and R98; that span reads GDML. An a divalent metal cation-binding site is contributed by D99.

It belongs to the class II aldolase/RraA-like family. In terms of assembly, homotrimer. A divalent metal cation serves as cofactor.

The catalysed reaction is 4-hydroxy-4-methyl-2-oxoglutarate = 2 pyruvate. The enzyme catalyses oxaloacetate + H(+) = pyruvate + CO2. In terms of biological role, catalyzes the aldol cleavage of 4-hydroxy-4-methyl-2-oxoglutarate (HMG) into 2 molecules of pyruvate. Also contains a secondary oxaloacetate (OAA) decarboxylase activity due to the common pyruvate enolate transition state formed following C-C bond cleavage in the retro-aldol and decarboxylation reactions. This is Putative 4-hydroxy-4-methyl-2-oxoglutarate aldolase from Pseudomonas putida (strain W619).